Consider the following 277-residue polypeptide: Kallikrein-13 (277 aa).

Residues 1–16 form the signal peptide; the sequence is MWPLALVIASLTLALS. Asparagine 30 is a glycosylation site (N-linked (GlcNAc...) asparagine). The Peptidase S1 domain occupies 36–263; it reads LPGGYTCFPH…YVLWIRETIR (228 aa). Disulfide bonds link cysteine 42/cysteine 178, cysteine 61/cysteine 77, cysteine 157/cysteine 224, cysteine 189/cysteine 203, and cysteine 214/cysteine 239. Active-site charge relay system residues include histidine 76 and aspartate 124. The active-site Charge relay system is the serine 218. An N-linked (GlcNAc...) asparagine glycan is attached at asparagine 225.

This sequence belongs to the peptidase S1 family. Kallikrein subfamily. As to expression, expressed in prostate, breast, testis and salivary gland.

It localises to the secreted. This Homo sapiens (Human) protein is Kallikrein-13 (KLK13).